The primary structure comprises 429 residues: Glutamate-1-semialdehyde 2,1-aminomutase 2 (429 aa).

Residue lysine 268 is modified to N6-(pyridoxal phosphate)lysine.

The protein belongs to the class-III pyridoxal-phosphate-dependent aminotransferase family. HemL subfamily. As to quaternary structure, homodimer. Requires pyridoxal 5'-phosphate as cofactor.

The protein localises to the cytoplasm. It carries out the reaction (S)-4-amino-5-oxopentanoate = 5-aminolevulinate. It participates in porphyrin-containing compound metabolism; protoporphyrin-IX biosynthesis; 5-aminolevulinate from L-glutamyl-tRNA(Glu): step 2/2. The sequence is that of Glutamate-1-semialdehyde 2,1-aminomutase 2 from Bacillus cereus (strain B4264).